The chain runs to 184 residues: Ribosome-recycling factor (184 aa).

Belongs to the RRF family.

The protein localises to the cytoplasm. Responsible for the release of ribosomes from messenger RNA at the termination of protein biosynthesis. May increase the efficiency of translation by recycling ribosomes from one round of translation to another. The chain is Ribosome-recycling factor from Bifidobacterium adolescentis (strain ATCC 15703 / DSM 20083 / NCTC 11814 / E194a).